The following is a 212-amino-acid chain: tRNA (guanine-N(7)-)-methyltransferase (212 aa).

Residues Glu-44, Glu-69, Asp-96, and Asp-118 each coordinate S-adenosyl-L-methionine. Asp-118 is a catalytic residue. Lys-122 lines the substrate pocket. An interaction with RNA region spans residues 124–129; that stretch reads RHEKRR. Substrate is bound by residues Asp-154 and 192 to 195; that span reads TEYE.

It belongs to the class I-like SAM-binding methyltransferase superfamily. TrmB family.

It catalyses the reaction guanosine(46) in tRNA + S-adenosyl-L-methionine = N(7)-methylguanosine(46) in tRNA + S-adenosyl-L-homocysteine. The protein operates within tRNA modification; N(7)-methylguanine-tRNA biosynthesis. Catalyzes the formation of N(7)-methylguanine at position 46 (m7G46) in tRNA. This Pediococcus pentosaceus (strain ATCC 25745 / CCUG 21536 / LMG 10740 / 183-1w) protein is tRNA (guanine-N(7)-)-methyltransferase.